A 62-amino-acid polypeptide reads, in one-letter code: Large ribosomal subunit protein bL28 (62 aa).

It belongs to the bacterial ribosomal protein bL28 family.

This is Large ribosomal subunit protein bL28 from Frankia casuarinae (strain DSM 45818 / CECT 9043 / HFP020203 / CcI3).